The sequence spans 126 residues: Ribonuclease P protein component (126 aa).

Belongs to the RnpA family. In terms of assembly, consists of a catalytic RNA component (M1 or rnpB) and a protein subunit.

The enzyme catalyses Endonucleolytic cleavage of RNA, removing 5'-extranucleotides from tRNA precursor.. RNaseP catalyzes the removal of the 5'-leader sequence from pre-tRNA to produce the mature 5'-terminus. It can also cleave other RNA substrates such as 4.5S RNA. The protein component plays an auxiliary but essential role in vivo by binding to the 5'-leader sequence and broadening the substrate specificity of the ribozyme. This chain is Ribonuclease P protein component, found in Rhodococcus erythropolis (strain PR4 / NBRC 100887).